A 252-amino-acid chain; its full sequence is DNA-(apurinic or apyrimidinic site) lyase Nei2 (252 aa).

Residue P2 is the Schiff-base intermediate with DNA of the active site. E3 functions as the Proton donor in the catalytic mechanism. The active-site Proton donor (in beta-elimination) is K51. Residues 216–250 (WVYGRAGEPCRRCGTLIQTDRGGERVTYWCPVCQT) form an FPG-type zinc finger. Positions 225, 228, 245, and 248 each coordinate Zn(2+).

It belongs to the FPG family. As to quaternary structure, monomer. The cofactor is Zn(2+).

The catalysed reaction is 2'-deoxyribonucleotide-(2'-deoxyribose 5'-phosphate)-2'-deoxyribonucleotide-DNA = a 3'-end 2'-deoxyribonucleotide-(2,3-dehydro-2,3-deoxyribose 5'-phosphate)-DNA + a 5'-end 5'-phospho-2'-deoxyribonucleoside-DNA + H(+). Its function is as follows. Involved in base excision repair of DNA damaged by oxidation or by mutagenic agents. Acts as DNA glycosylase that recognizes and removes damaged bases. Functionally, involved in the repair of psoralen-UVA DNA cross-links. A lyase that cleaves single-stranded (ss)DNA but not double-stranded (ds)DNA with an abasic site. Has 5-hydroxyuracil (5-OH-U) glycosylase activity on ssDNA with 5-OH-U, with 10-fold less activity on dsDNA, but weak to no uracil glycosylase activity. Has weak glycosylase activity on thymine glycol and dihydrothymine residues in ssDNA. Cleaves the DNA backbone by beta-delta elimination to generate a single-strand break at the site of the removed base with both 3'- and 5'-phosphates. The sequence is that of DNA-(apurinic or apyrimidinic site) lyase Nei2 from Mycolicibacterium smegmatis (strain ATCC 700084 / mc(2)155) (Mycobacterium smegmatis).